Reading from the N-terminus, the 214-residue chain is Thymidylate kinase (214 aa).

ATP is bound at residue 10–17 (GPDGAGKT).

It belongs to the thymidylate kinase family.

The enzyme catalyses dTMP + ATP = dTDP + ADP. Phosphorylation of dTMP to form dTDP in both de novo and salvage pathways of dTTP synthesis. The polypeptide is Thymidylate kinase (Latilactobacillus sakei subsp. sakei (strain 23K) (Lactobacillus sakei subsp. sakei)).